A 247-amino-acid polypeptide reads, in one-letter code: 2,3-bisphosphoglycerate-dependent phosphoglycerate mutase (247 aa).

Substrate contacts are provided by residues 8–15 (RHGESVWN), 21–22 (TG), R60, 87–90 (ERHY), K98, 114–115 (RR), and 183–184 (GN). H9 acts as the Tele-phosphohistidine intermediate in catalysis. E87 (proton donor/acceptor) is an active-site residue.

This sequence belongs to the phosphoglycerate mutase family. BPG-dependent PGAM subfamily. Homodimer.

The catalysed reaction is (2R)-2-phosphoglycerate = (2R)-3-phosphoglycerate. Its pathway is carbohydrate degradation; glycolysis; pyruvate from D-glyceraldehyde 3-phosphate: step 3/5. In terms of biological role, catalyzes the interconversion of 2-phosphoglycerate and 3-phosphoglycerate. This chain is 2,3-bisphosphoglycerate-dependent phosphoglycerate mutase, found in Geobacter metallireducens (strain ATCC 53774 / DSM 7210 / GS-15).